Consider the following 185-residue polypeptide: Peptidyl-tRNA hydrolase (185 aa).

TRNA is bound at residue phenylalanine 14. Residue histidine 19 is the Proton acceptor of the active site. Positions 64, 66, and 112 each coordinate tRNA.

It belongs to the PTH family. As to quaternary structure, monomer.

The protein localises to the cytoplasm. The catalysed reaction is an N-acyl-L-alpha-aminoacyl-tRNA + H2O = an N-acyl-L-amino acid + a tRNA + H(+). Functionally, hydrolyzes ribosome-free peptidyl-tRNAs (with 1 or more amino acids incorporated), which drop off the ribosome during protein synthesis, or as a result of ribosome stalling. Its function is as follows. Catalyzes the release of premature peptidyl moieties from peptidyl-tRNA molecules trapped in stalled 50S ribosomal subunits, and thus maintains levels of free tRNAs and 50S ribosomes. This Exiguobacterium sp. (strain ATCC BAA-1283 / AT1b) protein is Peptidyl-tRNA hydrolase.